The following is a 517-amino-acid chain: 2,3-bisphosphoglycerate-independent phosphoglycerate mutase 1 (517 aa).

Residues D17 and S67 each coordinate Mn(2+). S67 serves as the catalytic Phosphoserine intermediate. Residues H128, R158 to D159, R190, R196, R267 to R270, and K340 each bind substrate. D407, H411, D448, H449, and H467 together coordinate Mn(2+).

The protein belongs to the BPG-independent phosphoglycerate mutase family. Mn(2+) is required as a cofactor.

It catalyses the reaction (2R)-2-phosphoglycerate = (2R)-3-phosphoglycerate. Its pathway is carbohydrate degradation; glycolysis; pyruvate from D-glyceraldehyde 3-phosphate: step 3/5. Functionally, catalyzes the interconversion of 2-phosphoglycerate and 3-phosphoglycerate. The polypeptide is 2,3-bisphosphoglycerate-independent phosphoglycerate mutase 1 (Methanosarcina barkeri (strain Fusaro / DSM 804)).